The primary structure comprises 124 residues: Large ribosomal subunit protein bL12 (124 aa).

This sequence belongs to the bacterial ribosomal protein bL12 family. Homodimer. Part of the ribosomal stalk of the 50S ribosomal subunit. Forms a multimeric L10(L12)X complex, where L10 forms an elongated spine to which 2 to 4 L12 dimers bind in a sequential fashion. Binds GTP-bound translation factors.

Forms part of the ribosomal stalk which helps the ribosome interact with GTP-bound translation factors. Is thus essential for accurate translation. This chain is Large ribosomal subunit protein bL12, found in Dehalococcoides mccartyi (strain ATCC BAA-2266 / KCTC 15142 / 195) (Dehalococcoides ethenogenes (strain 195)).